The primary structure comprises 274 residues: Bis(5'-nucleosyl)-tetraphosphatase, symmetrical (274 aa).

It belongs to the Ap4A hydrolase family.

It catalyses the reaction P(1),P(4)-bis(5'-adenosyl) tetraphosphate + H2O = 2 ADP + 2 H(+). Hydrolyzes diadenosine 5',5'''-P1,P4-tetraphosphate to yield ADP. This chain is Bis(5'-nucleosyl)-tetraphosphatase, symmetrical, found in Shewanella sp. (strain MR-4).